Consider the following 148-residue polypeptide: MLKEFKDFAVRGNVVDMAVGIIIGAAFTTIINTLVNEVVMPPIGVLLGGVDFSDFYLLLKEGSKAAPYESLAAAKSAGAVTLSYGIFVNACISFLIVTFVMFLSVKGINRLRAKEDAAPDPAVRECPFCCSPVSVKAKRCPMCTSELK.

The next 2 helical transmembrane spans lie at 14-34 (VVDM…INTL) and 85-105 (GIFV…FLSV).

This sequence belongs to the MscL family. In terms of assembly, homopentamer.

The protein resides in the cell inner membrane. Its function is as follows. Channel that opens in response to stretch forces in the membrane lipid bilayer. May participate in the regulation of osmotic pressure changes within the cell. The sequence is that of Large-conductance mechanosensitive channel from Chlorobium phaeobacteroides (strain DSM 266 / SMG 266 / 2430).